The following is a 122-amino-acid chain: Large ribosomal subunit protein uL14 (122 aa).

It belongs to the universal ribosomal protein uL14 family. In terms of assembly, part of the 50S ribosomal subunit. Forms a cluster with proteins L3 and L19. In the 70S ribosome, L14 and L19 interact and together make contacts with the 16S rRNA in bridges B5 and B8.

Its function is as follows. Binds to 23S rRNA. Forms part of two intersubunit bridges in the 70S ribosome. This Laribacter hongkongensis (strain HLHK9) protein is Large ribosomal subunit protein uL14.